We begin with the raw amino-acid sequence, 1323 residues long: MSSDEASSEALAQEDIKQITLRIKLPACISNEEDLEVPSLLSETLADIRETLNLSAATQNLTNFNVFYQDINLSENFDDLVPLNDILTELGVGEIDSLNLVLKEKPYNLAAIYDHLNKFREVIGLHFLDKYSSEVGVLSGVSKFGDIDLQDVKETEPETQDDKDKETDETKSTKEDSNQTEEKKSEIVFTAEEKQQIGKITDELISGNTPSLVEFGTFDNISGSIKTPIKSLTVSQWSPVPSFQKLKGDLLYITLQTLENETLNITCHLSGFFVNKSSTINFNPAIKMNENGKVHKDYLLINLVDSLSPSFSKTIQENELVLSRSSKHPESFLIPSNSLMSSPWIVNPSKFANQPDASRSQLPLISNGVDGSGFVKEWNEDFQAIRELPNSTINERILREKLLMKSLHEFNKVATETAMNVIKGNLTPLNPNEPKDYHIYLRNGIFYSLGVNATGAFDCTGGNEAARYTSSKDLAAIKLLNRIDAKGIYNLVTCIVDYMGQRVICQAPVPGILDSSHEDENEEEPTDKVCYGLSTDGSKIFSDSSFENVLKPIAEAFHLKPHPVTLLDNVKSQGDLITSKDIKGVKGTDERKYIIDLYRATPLDIEFIESNWDESKETSYPHRETALRHEAVEEWWKRKVSVLFKAETERLEKEGKLESKDGEKPQIVLPSDQITINTDAFTTIDESSDDQNEVREVSKFIKEHLIEEFLEENSKQISPFDGNHLTSMLHKQGINLRYLGHIAEQACVRKDEHLKKITEARKVNEEEISKRKEESEKKATEGKDQDKEEEKANDNEKNKEDDKEEVSNGEFEPIVANFDSLYRISVQEMVARSVKHLLRKISADIPVYLIPAFVSHFHNCLLGSEINSSPECIIDETLKGFYNATELEFTKLNSNKVIALVANEVLIRFRYELPTDWISTLIRPFQLFREIAIKYGIQWKSQEYAFTNEEFEKVKDKLAVETQVFEAKTSKHKKNKKQQSQLITKSVDRTTIFVTDDIVNFVPIVKDSTYRSSLVDEIFETARAQIFKGETETGINLLNNLLSVYEQIYGRVHPETSKFYGLLSQYYAELGLKSEACNIARKACILAERTTGFDSYESITAYINSAFFESTNDDYINALNLYNKAINDWTLVYGDGHPSSVNTYANLAELLSEHKLFQQANKLFEKAISISTKLNGEESQICGMLRYRYGGTLLGGGDFKSALDQFKSANDIFTKFIGPDDQLSKKSLSFVTNISTYLAYNEHQKSEQKKALAQQASASNGKVKAKSAVEQQLKSSKKGKKNDATQPNPEIASKSVDDILQYIEGKNPKKQLKKKSNNKKSKK.

The TPR 1 repeat unit spans residues 103-141; it reads KEKPYNLAAIYDHLNKFREVIGLHFLDKYSSEVGVLSGV. Positions 149–186 are disordered; it reads LQDVKETEPETQDDKDKETDETKSTKEDSNQTEEKKSE. Residues 150–186 are compositionally biased toward basic and acidic residues; sequence QDVKETEPETQDDKDKETDETKSTKEDSNQTEEKKSE. In terms of domain architecture, Clu spans 351–608; it reads FANQPDASRS…RATPLDIEFI (258 aa). The stretch at 530-563 is one TPR 2 repeat; sequence CYGLSTDGSKIFSDSSFENVLKPIAEAFHLKPHP. The span at 764–801 shows a compositional bias: basic and acidic residues; sequence NEEEISKRKEESEKKATEGKDQDKEEEKANDNEKNKED. The disordered stretch occupies residues 764–808; the sequence is NEEEISKRKEESEKKATEGKDQDKEEEKANDNEKNKEDDKEEVSN. TPR repeat units lie at residues 1042-1076, 1099-1132, 1141-1174, and 1183-1216; these read LSVYEQIYGRVHPETSKFYGLLSQYYAELGLKSEA, ITAYINSAFFESTNDDYINALNLYNKAINDWTLV, VNTYANLAELLSEHKLFQQANKLFEKAISISTKL, and GMLRYRYGGTLLGGGDFKSALDQFKSANDIFTKF. A disordered region spans residues 1250 to 1323; that stretch reads KALAQQASAS…KKSNNKKSKK (74 aa). The segment covering 1308 to 1323 has biased composition (basic residues); that stretch reads PKKQLKKKSNNKKSKK.

The protein belongs to the CLU family. In terms of assembly, may associate with the eukaryotic translation initiation factor 3 (eIF-3) complex.

The protein localises to the cytoplasm. Its function is as follows. mRNA-binding protein involved in proper cytoplasmic distribution of mitochondria. This is Clustered mitochondria protein homolog from Debaryomyces hansenii (strain ATCC 36239 / CBS 767 / BCRC 21394 / JCM 1990 / NBRC 0083 / IGC 2968) (Yeast).